A 517-amino-acid polypeptide reads, in one-letter code: N-acetylglucosamine-1-phosphodiester alpha-N-acetylglucosaminidase (517 aa).

A signal peptide spans 1–25; that stretch reads MAAPRGPGLFLIPALLGLLGVAWCS. Positions 26–49 are cleaved as a propeptide — removed in mature form; that stretch reads LSFGVSRDDDLLLPYPLARRRPSR. Residues 49–75 are disordered; the sequence is RDCARVRSGSPEQESWPPPPTNPGASH. Topologically, residues 50-453 are lumenal; sequence DCARVRSGSP…ASFTRTTWLA (404 aa). 5 cysteine pairs are disulfide-bonded: Cys-116/Cys-149, Cys-133/Cys-324, Cys-308/Cys-315, Cys-363/Cys-374, and Cys-381/Cys-390. Asn-215 and Asn-297 each carry an N-linked (GlcNAc...) asparagine glycan. One can recognise an EGF-like domain in the interval 359–391; it reads SELDCGPSNCSQHGLCTETGCHCDAGWTGSNCS. Asn-367, Asn-389, and Asn-421 each carry an N-linked (GlcNAc...) asparagine glycan. A helical membrane pass occupies residues 454 to 474; sequence LTLTLIFLLLISTGVNVSLFL. The Cytoplasmic segment spans residues 475-517; that stretch reads GSRAERNRHLDGDYVYHPLQEVNGEALTAEKEHMEETSNPFKD. Positions 488-491 match the Tyrosine-based internalization motif motif; it reads YVYH. The interval 488 to 495 is mediates the interaction with AP4M1; the sequence is YVYHPLQE. The NPF internalization motif motif lies at 511–515; the sequence is TSNPF.

In terms of assembly, homotetramer arranged as two disulfide-linked homodimers. Interacts with AP4M1. The precursor is cleaved and activated in the trans-Golgi network by a furin endopeptidase.

It is found in the golgi apparatus. It localises to the golgi stack membrane. The protein localises to the trans-Golgi network. The enzyme catalyses N(4)-[6-(N-acetyl-alpha-D-glucosaminyl-1-phospho)-alpha-D-mannosyl-(1-&gt;2)-alpha-D-mannosyl-(glycan)]-L-asparaginyl-[protein] + H2O = N(4)-[6-phospho-alpha-D-mannosyl-(1-&gt;2)-alpha-D-mannosyl-(glycan)]-L-asparaginyl-[protein] + N-acetyl-D-glucosamine + H(+). Its pathway is protein modification; protein glycosylation. In terms of biological role, catalyzes the second step in the formation of the mannose 6-phosphate targeting signal on lysosomal enzyme oligosaccharides by removing GlcNAc residues from GlcNAc-alpha-P-mannose moieties, which are formed in the first step. Also hydrolyzes UDP-GlcNAc, a sugar donor for Golgi N-acetylglucosaminyltransferases. This chain is N-acetylglucosamine-1-phosphodiester alpha-N-acetylglucosaminidase (Nagpa), found in Mus musculus (Mouse).